Reading from the N-terminus, the 228-residue chain is Translin (228 aa).

Residues 86-90 are DNA/RNA binding; sequence RFHEH. A leucine-zipper region spans residues 177–198; sequence LDSGFRLLNLKNDSLRKRYDGL. N6-acetyllysine is present on K187. Residue S190 is modified to Phosphoserine. N6-acetyllysine is present on K199.

Belongs to the translin family. Ring-shaped heterooctamer of six TSN and two TSNAX subunits, DNA/RNA binding occurs inside the ring.

The protein localises to the cytoplasm. The protein resides in the nucleus. In terms of biological role, DNA-binding protein that specifically recognizes consensus sequences at the breakpoint junctions in chromosomal translocations, mostly involving immunoglobulin (Ig)/T-cell receptor gene segments. Seems to recognize single-stranded DNA ends generated by staggered breaks occurring at recombination hot spots. Functionally, exhibits both single-stranded and double-stranded endoribonuclease activity. May act as an activator of RNA-induced silencing complex (RISC) by facilitating endonucleolytic cleavage of the siRNA passenger strand. This Mus musculus (Mouse) protein is Translin (Tsn).